Here is a 276-residue protein sequence, read N- to C-terminus: SRR1-like protein (276 aa).

Ser30 carries the phosphoserine modification. Residue Tyr34 is modified to Phosphotyrosine.

It belongs to the SRR1 family.

Functionally, possible regulator involved in a circadian clock input pathway. This chain is SRR1-like protein, found in Drosophila melanogaster (Fruit fly).